A 163-amino-acid polypeptide reads, in one-letter code: Probable ribosome biogenesis protein RLP24 (163 aa).

The protein belongs to the eukaryotic ribosomal protein eL24 family. As to quaternary structure, associated with nucleolar and cytoplasmic pre-60S particles. At the end of biogenesis it dissociates from cytoplasmic pre-60S particles and is likely to be exchanged for its ribosomal homolog, RPL24.

Its subcellular location is the nucleus. It localises to the nucleolus. Its function is as follows. Involved in the biogenesis of the 60S ribosomal subunit. Ensures the docking of GTPBP4/NOG1 to pre-60S particles. In Pongo abelii (Sumatran orangutan), this protein is Probable ribosome biogenesis protein RLP24 (RSL24D1).